A 388-amino-acid polypeptide reads, in one-letter code: Succinate--CoA ligase [ADP-forming] subunit beta (388 aa).

Residues 9 to 244 enclose the ATP-grasp domain; that stretch reads KSLFAEYGLP…PSQDDAREAH (236 aa). ATP is bound by residues K46, 53 to 55, E99, T102, and E107; that span reads GRG. Mg(2+)-binding residues include N199 and D213. Substrate-binding positions include N264 and 321 to 323; that span reads GIV.

This sequence belongs to the succinate/malate CoA ligase beta subunit family. As to quaternary structure, heterotetramer of two alpha and two beta subunits. Requires Mg(2+) as cofactor.

It carries out the reaction succinate + ATP + CoA = succinyl-CoA + ADP + phosphate. The enzyme catalyses GTP + succinate + CoA = succinyl-CoA + GDP + phosphate. Its pathway is carbohydrate metabolism; tricarboxylic acid cycle; succinate from succinyl-CoA (ligase route): step 1/1. In terms of biological role, succinyl-CoA synthetase functions in the citric acid cycle (TCA), coupling the hydrolysis of succinyl-CoA to the synthesis of either ATP or GTP and thus represents the only step of substrate-level phosphorylation in the TCA. The beta subunit provides nucleotide specificity of the enzyme and binds the substrate succinate, while the binding sites for coenzyme A and phosphate are found in the alpha subunit. This chain is Succinate--CoA ligase [ADP-forming] subunit beta, found in Shewanella baltica (strain OS195).